Consider the following 330-residue polypeptide: Ferredoxin--NADP reductase (330 aa).

FAD is bound by residues Glu34, Gln42, Tyr47, Val87, Phe121, Asp285, and Ser325.

Belongs to the ferredoxin--NADP reductase type 2 family. In terms of assembly, homodimer. The cofactor is FAD.

It carries out the reaction 2 reduced [2Fe-2S]-[ferredoxin] + NADP(+) + H(+) = 2 oxidized [2Fe-2S]-[ferredoxin] + NADPH. This chain is Ferredoxin--NADP reductase, found in Limosilactobacillus fermentum (strain NBRC 3956 / LMG 18251) (Lactobacillus fermentum).